Reading from the N-terminus, the 142-residue chain is Protein archease (142 aa).

The Ca(2+) site is built by Asp-12, Asp-141, and Ile-142.

This sequence belongs to the archease family. As to quaternary structure, in solution, exists as a monomer, trimer and hexamer. Oligomeric states form a tripartite complex with tRNA and PAB1947 methyltransferase.

Its function is as follows. Activates the tRNA-splicing ligase complex by facilitating the enzymatic turnover of catalytic subunit RtcB. Acts by promoting the guanylylation of RtcB, a key intermediate step in tRNA ligation. Can also alter the NTP specificity of RtcB such that ATP, dGTP or ITP is used efficiently. Chaperone or modulator of proteins involved in DNA or RNA processing. Protects the tRNA (cytosine-5-)-methyltransferase PAB1947 against aggregation and increases its specificity. This is Protein archease from Pyrococcus abyssi (strain GE5 / Orsay).